The primary structure comprises 409 residues: 2-methylfumaryl-CoA isomerase (409 aa).

Catalysis depends on Asp165, which acts as the Nucleophile.

It belongs to the CoA-transferase III family. Mesaconyl-CoA isomerase subfamily. In terms of assembly, homodimer.

It carries out the reaction 2-methylfumaryl-CoA = 3-methylfumaryl-CoA. With respect to regulation, partially inhibited by hydroxylamine. Functionally, involved in the glyoxylate assimilation cycle used to regenerate acetyl-CoA and produce pyruvate as universal precursor for biosynthesis. This reaction involves an intramolecular CoA transferase that catalyzes the reversible transfer of the CoA moiety from the C1-carboxyl group of mesaconyl-CoA to the C4-carboxyl group. It does not require free mesaconate as CoA acceptor. The chain is 2-methylfumaryl-CoA isomerase (mct) from Chloroflexus aurantiacus (strain ATCC 29366 / DSM 635 / J-10-fl).